Reading from the N-terminus, the 522-residue chain is MSELIMYILATAVVSIGVGIVAGKAIFQKDFSKQETEAKEKANLIIKEAELKAEATKKDKQLEAKEHFLKLKTEFEEDSNKKKNLIIQNEQKIKQREQTISKQMETNTRREAELDSLRENLSSQLEILNKRKEELEKLRHSQIEKLEKIAGLTGEEAKAQLMDTIKEEARTEASSYIKRITDEAKMTATKDAKKIVIETLQRTATENAVENCVSIFNIESDDIKGKIIGREGRNIRALEAATGVEIIVDDTPEAIIISGFDPVRREVARLSLHRLVQDGRIHPARIEEVVTKTAKHLDEEIIEIGERTAIDLGIHGLHPELIRLVGRMRFRSSYGQNLLQHSREVAKLCATMASELGLNAKVAKRAGLLHDIGKVYPDEPELPHAILGMELAKKYKESAEICNAIGAHHDEIEMTGLISPIVQVCDAISGARPGARREVMEQYIKRLKDLEQLALSFDGVLKCYAIQAGRELRIMVDAENVSDDKAGILSFDIAQKIEKEMQYPGQIKVTVIREMRAVNFAK.

Residues 3–23 traverse the membrane as a helical segment; sequence ELIMYILATAVVSIGVGIVAG. A KH domain is found at 212-272; the sequence is CVSIFNIESD…VRREVARLSL (61 aa). The HD domain occupies 338–431; it reads LLQHSREVAK…VQVCDAISGA (94 aa).

It belongs to the RNase Y family.

The protein localises to the cell membrane. Functionally, endoribonuclease that initiates mRNA decay. The protein is Ribonuclease Y of Cytophaga hutchinsonii (strain ATCC 33406 / DSM 1761 / CIP 103989 / NBRC 15051 / NCIMB 9469 / D465).